The chain runs to 539 residues: Sorting nexin-27 (539 aa).

The disordered stretch occupies residues 1–40 (MADEDGEGIHPSAPHRNGGGGGGSGLHCAGNGGGGGGGPR). A compositionally biased stretch (gly residues) spans 17–39 (NGGGGGGSGLHCAGNGGGGGGGP). A PDZ domain is found at 41–134 (VVRIVKSESG…ELILTVLSVP (94 aa)). Phosphoserine occurs at positions 49 and 60. Residues 159 to 267 (QAVPISVPTY…EFLSESDENY (109 aa)) enclose the PX domain. The 90-residue stretch at 271–360 (SDVELRVALP…TCLTIRKWLF (90 aa)) folds into the Ras-associating domain. The segment at 271–360 (SDVELRVALP…TCLTIRKWLF (90 aa)) is FERM-like region F1. Residues 371 to 419 (NDLAVTYFFHQAVDDVKKGYIKAEEKSYQLQKLHEQRKMVMYLNMLRTC) are FERM-like region F2. An FERM-like region F3 region spans residues 423 to 523 (NEIIFPHCAC…RVFCELKWRK (101 aa)).

Core component of the SNX27-retromer, a multiprotein complex composed of SNX27, the WASH complex and the retromer complex. Interacts (via the FERM-like regions) with the WASH complex. Interacts with SNX1. Interacts with CYTIP. Interacts with DGKZ. Interacts with MCC. Interacts (via PDZ domain) with a number of target transmembrane proteins (via PDZ-binding motif): ABCC4, ADRB2, ARHGEF7, GRIA1, GRIA2, GRIN1, GRIN2A GRIN2C, KCNJ6, KCNJ9 and SLC2A1/GLUT1. Interacts (via PDZ domains) with SLC9A3; directs SLC9A3 membrane insertion from early endosomes to the plasma membrane. As to expression, expressed in cells of hematopoietic origin.

The protein resides in the early endosome membrane. The protein localises to the cytoplasm. It is found in the cytosol. Involved in the retrograde transport from endosome to plasma membrane, a trafficking pathway that promotes the recycling of internalized transmembrane proteins. Following internalization, endocytosed transmembrane proteins are delivered to early endosomes and recycled to the plasma membrane instead of being degraded in lysosomes. SNX27 specifically binds and directs sorting of a subset of transmembrane proteins containing a PDZ-binding motif at the C-terminus: following interaction with target transmembrane proteins, associates with the retromer complex, preventing entry into the lysosomal pathway, and promotes retromer-tubule based plasma membrane recycling. SNX27 also binds with the WASH complex. Interacts with membranes containing phosphatidylinositol-3-phosphate (PtdIns(3P)). May participate in establishment of natural killer cell polarity. Recruits CYTIP to early endosomes. The polypeptide is Sorting nexin-27 (Snx27) (Mus musculus (Mouse)).